The following is a 1199-amino-acid chain: DNA-directed RNA polymerase subunit beta (1199 aa).

The segment at 1175–1199 is disordered; that stretch reads EEKKAHEAAAQATDGKSANSTDDKK. A compositionally biased stretch (polar residues) spans 1188-1199; the sequence is DGKSANSTDDKK.

Belongs to the RNA polymerase beta chain family. The RNAP catalytic core consists of 2 alpha, 1 beta, 1 beta' and 1 omega subunit. When a sigma factor is associated with the core the holoenzyme is formed, which can initiate transcription.

It catalyses the reaction RNA(n) + a ribonucleoside 5'-triphosphate = RNA(n+1) + diphosphate. DNA-dependent RNA polymerase catalyzes the transcription of DNA into RNA using the four ribonucleoside triphosphates as substrates. In Lacticaseibacillus casei (strain BL23) (Lactobacillus casei), this protein is DNA-directed RNA polymerase subunit beta.